A 473-amino-acid polypeptide reads, in one-letter code: Methionine aminopeptidase 2 (473 aa).

Residues Leu-23–Pro-121 form a disordered region. Positions Lys-41 to Asn-53 are enriched in polar residues. The span at Asp-73–Val-83 shows a compositional bias: acidic residues. The span at Ala-84–Ala-93 shows a compositional bias: low complexity. A compositionally biased stretch (basic residues) spans Lys-97–Leu-113. Residue His-224 participates in substrate binding. A divalent metal cation-binding residues include Asp-244, Asp-255, and His-326. A substrate-binding site is contributed by His-334. Residues Glu-359 and Glu-454 each coordinate a divalent metal cation.

The protein belongs to the peptidase M24A family. Methionine aminopeptidase eukaryotic type 2 subfamily. Requires Co(2+) as cofactor. The cofactor is Zn(2+). Mn(2+) is required as a cofactor. Fe(2+) serves as cofactor.

It localises to the cytoplasm. It carries out the reaction Release of N-terminal amino acids, preferentially methionine, from peptides and arylamides.. Cotranslationally removes the N-terminal methionine from nascent proteins. The N-terminal methionine is often cleaved when the second residue in the primary sequence is small and uncharged (Met-Ala-, Cys, Gly, Pro, Ser, Thr, or Val). In Lodderomyces elongisporus (strain ATCC 11503 / CBS 2605 / JCM 1781 / NBRC 1676 / NRRL YB-4239) (Yeast), this protein is Methionine aminopeptidase 2.